Reading from the N-terminus, the 432-residue chain is Histidine--tRNA ligase (432 aa).

The protein belongs to the class-II aminoacyl-tRNA synthetase family. In terms of assembly, homodimer.

The protein resides in the cytoplasm. The enzyme catalyses tRNA(His) + L-histidine + ATP = L-histidyl-tRNA(His) + AMP + diphosphate + H(+). The sequence is that of Histidine--tRNA ligase from Ralstonia nicotianae (strain ATCC BAA-1114 / GMI1000) (Ralstonia solanacearum).